Consider the following 406-residue polypeptide: L-cysteine:1D-myo-inositol 2-amino-2-deoxy-alpha-D-glucopyranoside ligase (406 aa).

Position 45 (Cys45) interacts with Zn(2+). L-cysteinyl-5'-AMP is bound by residues 45–48 (CGIT), Thr60, and 83–85 (NIT). The 'HIGH' region signature appears at 47-57 (ITPYDATHMGH). The 'ERGGDP' region signature appears at 185–190 (ERGGDP). Trp225 contacts L-cysteinyl-5'-AMP. Cys229 contributes to the Zn(2+) binding site. L-cysteinyl-5'-AMP is bound at residue 247-249 (GSD). His254 lines the Zn(2+) pocket. L-cysteinyl-5'-AMP is bound at residue Val281. The 'KMSKS' region signature appears at 287 to 291 (KMSKS).

The protein belongs to the class-I aminoacyl-tRNA synthetase family. MshC subfamily. In terms of assembly, monomer. It depends on Zn(2+) as a cofactor.

The enzyme catalyses 1D-myo-inositol 2-amino-2-deoxy-alpha-D-glucopyranoside + L-cysteine + ATP = 1D-myo-inositol 2-(L-cysteinylamino)-2-deoxy-alpha-D-glucopyranoside + AMP + diphosphate + H(+). In terms of biological role, catalyzes the ATP-dependent condensation of GlcN-Ins and L-cysteine to form L-Cys-GlcN-Ins. The sequence is that of L-cysteine:1D-myo-inositol 2-amino-2-deoxy-alpha-D-glucopyranoside ligase from Kribbella flavida (strain DSM 17836 / JCM 10339 / NBRC 14399).